A 140-amino-acid chain; its full sequence is Nucleoside diphosphate kinase (140 aa).

Positions 11, 59, 87, 93, 104, and 114 each coordinate ATP. His117 (pros-phosphohistidine intermediate) is an active-site residue.

This sequence belongs to the NDK family. As to quaternary structure, homotetramer. Mg(2+) is required as a cofactor.

The protein localises to the cytoplasm. The enzyme catalyses a 2'-deoxyribonucleoside 5'-diphosphate + ATP = a 2'-deoxyribonucleoside 5'-triphosphate + ADP. It catalyses the reaction a ribonucleoside 5'-diphosphate + ATP = a ribonucleoside 5'-triphosphate + ADP. Its function is as follows. Major role in the synthesis of nucleoside triphosphates other than ATP. The ATP gamma phosphate is transferred to the NDP beta phosphate via a ping-pong mechanism, using a phosphorylated active-site intermediate. The sequence is that of Nucleoside diphosphate kinase from Rhodopseudomonas palustris (strain BisA53).